A 363-amino-acid polypeptide reads, in one-letter code: Aminomethyltransferase (363 aa).

Belongs to the GcvT family. The glycine cleavage system is composed of four proteins: P, T, L and H.

It catalyses the reaction N(6)-[(R)-S(8)-aminomethyldihydrolipoyl]-L-lysyl-[protein] + (6S)-5,6,7,8-tetrahydrofolate = N(6)-[(R)-dihydrolipoyl]-L-lysyl-[protein] + (6R)-5,10-methylene-5,6,7,8-tetrahydrofolate + NH4(+). In terms of biological role, the glycine cleavage system catalyzes the degradation of glycine. This Staphylococcus aureus (strain N315) protein is Aminomethyltransferase.